We begin with the raw amino-acid sequence, 1458 residues long: ATPase family AAA domain-containing protein 2B (1458 aa).

The segment at 1 to 155 (MVNTRKSSLR…LRGEKKGDGD (155 aa)) is disordered. Ser16 is modified (phosphoserine). Residues 23 to 33 (PGAGAEPGATG) show a composition bias toward gly residues. Low complexity predominate over residues 34–58 (GSSHFISSRTRSSKTRAASCPAAKA). Ser79, Ser81, and Ser86 each carry phosphoserine. The span at 99-115 (VCKDKSKSRSTGQREEW) shows a compositional bias: basic and acidic residues. The span at 116–129 (NLSTGQARLTSQPG) shows a compositional bias: polar residues. Ser140 is subject to Phosphoserine. Thr221 carries the phosphothreonine modification. The segment at 244 to 286 (NSYGIQNHHEVSTEGEEEESQEEDGDIEVEEAEGEENDRPYNL) is disordered. Acidic residues predominate over residues 256–279 (TEGEEEESQEEDGDIEVEEAEGEE). Ser318 is modified (phosphoserine). Basic residues predominate over residues 321 to 332 (RRSHIRRKKHAI). Positions 321 to 353 (RRSHIRRKKHAIHSSDTTSSDEERFERRKSKSM) are disordered. 441–448 (GPPGTGKT) contributes to the ATP binding site. A Phosphoserine modification is found at Ser939. Residues 943 to 974 (QLSESEKSRMEDQEENTLRELRLFLRDVTKRL) are a coiled coil. The region spanning 951 to 1066 (RMEDQEENTL…DTAHAIIAAE (116 aa)) is the Bromo domain. Disordered stretches follow at residues 1189 to 1208 (DCHE…NDES), 1217 to 1257 (QGQR…EQTS), and 1309 to 1330 (LLED…DDLE). The segment covering 1240–1252 (NESLLVNSSSSLN) has biased composition (low complexity). Ser1338 and Ser1347 each carry phosphoserine.

Belongs to the AAA ATPase family. As to quaternary structure, binds acetylated lysine residues in histone H1.4, H2A, H2B, H3 and H4 (in vitro).

The protein resides in the nucleus. The protein is ATPase family AAA domain-containing protein 2B (ATAD2B) of Homo sapiens (Human).